Consider the following 1866-residue polypeptide: Protein strawberry notch homolog (1866 aa).

Low complexity predominate over residues 19–28 (QQSSPTPSTS). 5 disordered regions span residues 19–63 (QQSS…HSSS), 132–151 (TAPT…IVPK), 156–253 (LFET…GLPI), 561–581 (GMAS…QKAK), and 1112–1308 (GLSG…ARGS). Polar residues-rich tracts occupy residues 37–63 (QSFS…HSSS) and 134–146 (PTVN…TPTV). Over residues 161-176 (TADSPTPSGDTSTTAS) the composition is skewed to low complexity. 2 stretches are compositionally biased toward polar residues: residues 191–203 (DRQN…TARS) and 210–228 (TPST…LTQR). Residues 229-239 (SHTSSPASSAS) show a composition bias toward low complexity. A compositionally biased stretch (polar residues) spans 566-577 (RLQTTPQPLTKS). Positions 1112-1126 (GLSGIGRSSMSSSTG) are enriched in low complexity. Residues 1142–1152 (DGSDDEVENDM) are compositionally biased toward acidic residues. Basic and acidic residues predominate over residues 1164 to 1177 (ESAREEAEGARTLE). The segment covering 1194 to 1213 (SSSDDSDEEVVKDEDEDEEA) has biased composition (acidic residues). Basic and acidic residues-rich tracts occupy residues 1262 to 1281 (RDEE…EERR) and 1290 to 1304 (RRAE…EELQ).

It belongs to the SBNO family. As to expression, expressed in the somatic gonad, neurons, hypodermal cells, seam cells, the excretory system, and intestinal cells (at protein level).

The protein localises to the nucleus. In terms of biological role, transcriptional activator that functions upstream of the let-60/Ras and let-23/EGFR signaling pathways to positively regulate lin-3 expression and thereby promote vulval induction. Plays a role in excretory duct development. Plays a role in male tail development. The sequence is that of Protein strawberry notch homolog from Caenorhabditis elegans.